Here is a 238-residue protein sequence, read N- to C-terminus: Proenkephalin-A (238 aa).

The signal sequence occupies residues 1 to 25 (MAASALSTCLWMLVLGTCVSLVVGT). Intrachain disulfides connect C27-C50, C31-C54, and C34-C66. Residues 76 to 103 (QSPLASQQDQERVDAMMADEEDATSPEH) are disordered. 3 consecutive propeptides follow at residues 124 to 167 (SSAS…AEAV), 177 to 195 (ADRG…GRVL), and 206 to 230 (VGRP…SELQ).

This sequence belongs to the opioid neuropeptide precursor family. As to expression, expressed by the venom gland. Moderately expressed in the venom gland transcriptome.

The protein localises to the secreted. Its function is as follows. Met-enkephalins compete with and mimic the effects of opiate drugs. They play a role in a number of physiologic functions, including pain perception and responses to stress. Enkephalin peptides found in Meiacanthus fangblennies induce physiological effects via their interaction with delta-type opioid receptors (OPRD1) (tested on M.grammistes). Therefore, finding a proenkephalin sequence in M.atrodorsalis venom suggests that this protein act in the same manner. This Meiacanthus atrodorsalis (Forktail blenny) protein is Proenkephalin-A.